The chain runs to 106 residues: Small ribosomal subunit protein uS10 (106 aa).

Belongs to the universal ribosomal protein uS10 family. In terms of assembly, part of the 30S ribosomal subunit.

Involved in the binding of tRNA to the ribosomes. The sequence is that of Small ribosomal subunit protein uS10 from Pyrobaculum islandicum (strain DSM 4184 / JCM 9189 / GEO3).